The following is a 262-amino-acid chain: Intercellular adhesion molecule 4 (262 aa).

Residues 1 to 22 form the signal peptide; it reads MESALLLPSLLLVAAYPRGGSP. The Extracellular portion of the chain corresponds to 23–231; sequence QQEWMQSPPA…LTVLALSPAS (209 aa). 2 Ig-like C2-type domains span residues 54–116 and 138–209; these read GGSA…TREA and GHKY…LNLD. N-linked (GlcNAc...) asparagine glycans are attached at residues N60, N84, and N182. 4 cysteine pairs are disulfide-bonded: C61–C105, C61–C109, C65–C109, and C145–C202. Residues 232-252 form a helical membrane-spanning segment; sequence IALASTSIATLVGILLAVGAV. Over 253–262 the chain is Cytoplasmic; it reads YVRKYLAVQT.

The protein belongs to the immunoglobulin superfamily. ICAM family.

Its subcellular location is the cell membrane. It localises to the secreted. Adhesion molecule that binds to leukocyte adhesion LFA-1 protein LFA-1 (integrin alpha-L/beta-2). ICAM4 is also a ligand for alpha-4/beta-1 and alpha-V integrins. Isoform 2 may modulate binding of membrane-associated ICAM4. The protein is Intercellular adhesion molecule 4 (Icam4) of Mus musculus (Mouse).